We begin with the raw amino-acid sequence, 298 residues long: MVNAAIVVSSNRPNVLEQISSLFRDGKTRSLGEQWTLVSGQLKGTFEDAKDACNRISATENVDCNCLSEATFSTKKKLVVFDMDSTLIQQECIDELAAEAGIQKEVATITSLAMNGEIDFQESLRRRVSLLQGLSVDVINKVIGKITFTPGAKQLCHCLKQMGATLVVASGGFVPMAEYVKGQLDLDYAYANVLEFSDDGKFLTGKVQGAIVDGQRKASILREKREELGLNKLETMAVGDGANDLVMMAESGLGIAFKAKPKVQLLADSKINLPSLQNALYLLGIDEQQQKKLLENKN.

The Nucleophile role is filled by aspartate 82. The Mg(2+) site is built by aspartate 82 and aspartate 84. The active-site Proton donor is the aspartate 84. Substrate is bound by residues glutamate 91, arginine 127, 170 to 171, and lysine 217; that span reads SG. Aspartate 240 lines the Mg(2+) pocket. Substrate is bound at residue asparagine 243.

This sequence belongs to the HAD-like hydrolase superfamily. SerB family. The cofactor is Mg(2+).

The catalysed reaction is O-phospho-L-serine + H2O = L-serine + phosphate. The enzyme catalyses O-phospho-D-serine + H2O = D-serine + phosphate. The protein operates within amino-acid biosynthesis; L-serine biosynthesis; L-serine from 3-phospho-D-glycerate: step 3/3. The chain is Probable phosphoserine phosphatase from Schizosaccharomyces pombe (strain 972 / ATCC 24843) (Fission yeast).